The following is a 715-amino-acid chain: Fatty acid oxidation complex subunit alpha (715 aa).

The tract at residues 1-190 (MTTTSAFMLS…KAGLVDDVVP (190 aa)) is enoyl-CoA hydratase. Residues 306–714 (GPLNSVGILG…FWTNGETDQG (409 aa)) are 3-hydroxyacyl-CoA dehydrogenase.

This sequence in the N-terminal section; belongs to the enoyl-CoA hydratase/isomerase family. The protein in the central section; belongs to the 3-hydroxyacyl-CoA dehydrogenase family. In terms of assembly, heterotetramer of two alpha chains (FadJ) and two beta chains (FadI).

It localises to the cytoplasm. It catalyses the reaction a (3S)-3-hydroxyacyl-CoA = a (2E)-enoyl-CoA + H2O. The enzyme catalyses a 4-saturated-(3S)-3-hydroxyacyl-CoA = a (3E)-enoyl-CoA + H2O. The catalysed reaction is a (3S)-3-hydroxyacyl-CoA + NAD(+) = a 3-oxoacyl-CoA + NADH + H(+). It carries out the reaction (3S)-3-hydroxybutanoyl-CoA = (3R)-3-hydroxybutanoyl-CoA. It functions in the pathway lipid metabolism; fatty acid beta-oxidation. In terms of biological role, catalyzes the formation of a hydroxyacyl-CoA by addition of water on enoyl-CoA. Also exhibits 3-hydroxyacyl-CoA epimerase and 3-hydroxyacyl-CoA dehydrogenase activities. This is Fatty acid oxidation complex subunit alpha from Salmonella typhi.